A 245-amino-acid chain; its full sequence is MKSGIYQIKNTLNNKVYVGSAKDFEKRWKRHFKDLEKGCHSSIKLQRSFNKHGNVFECSILEEIPYEKDLIIERENFWIKELNSKINGYNIADATFGDTCSTHPLKEEIIKKRSETVKAKMLKLGPDGRKALYSKPGSKNGRWNPETHKFCKCGVRIQTSAYTCSKCRNRSGENNSFFNHKHSDITKSKISEKMKGKKPSNIKKISCDGVIFDCAADAARHFKISSGLVTYRVKSDKWNWFYINA.

One can recognise a GIY-YIG domain in the interval 1-88 (MKSGIYQIKN…IKELNSKING (88 aa)).

This sequence to endonucleases of group I introns of fungi and phage. Mg(2+) is required as a cofactor.

In terms of biological role, this endonuclease is specific to the thymidylate synthase (td) gene splice junction and is involved in intron homing. The protein is Intron-associated endonuclease 1 (ITEVIR) of Enterobacteria phage T4 (Bacteriophage T4).